The sequence spans 332 residues: dTDP-3,4-didehydro-2,6-dideoxy-alpha-D-glucose 3-reductase (332 aa).

17–23 (CADIAWR) contacts NADP(+). Arginine 24 is a binding site for substrate. NADP(+)-binding positions include 42–43 (SR), tyrosine 63, leucine 79, and histidine 84. Catalysis depends on lysine 102, which acts as the Proton donor. Residues arginine 170 and aspartate 182 each contribute to the NADP(+) site. Positions 240 and 260 each coordinate substrate.

It belongs to the Gfo/Idh/MocA family. Homotetramer; dimer of dimers.

The enzyme catalyses dTDP-4-dehydro-2,6-dideoxy-alpha-D-glucose + NADP(+) = dTDP-3,4-didehydro-2,6-dideoxy-alpha-D-glucose + NADPH + H(+). Its pathway is antibiotic biosynthesis. Its function is as follows. Involved in the biosynthesis of L-digitoxose, an unusual dideoxysugar attached to various pharmacologically active natural products, including the antitumor antibiotic tetrocarcin A, and the antibiotics kijanimicin and jadomycin B. Catalyzes the reduction of the C-3 keto moiety of dTDP-3,4-diketo-2,6-dideoxy-alpha-D-glucose to yield dTDP-4-keto-2,6-dideoxy-alpha-D-glucose. Also able to reduce dTDP-3-keto-6-deoxy-D-galactose and dTDP-3-keto-6-deoxy-D-glucose to yield dTDP-fucose and dTDP-quinovose, respectively. This chain is dTDP-3,4-didehydro-2,6-dideoxy-alpha-D-glucose 3-reductase, found in Actinomadura kijaniata.